We begin with the raw amino-acid sequence, 210 residues long: Large ribosomal subunit protein uL22 (210 aa).

The segment at 123–210 is disordered; the sequence is NEMTSKETVK…TKSTKKEGSK (88 aa). Positions 126-157 are enriched in basic and acidic residues; that stretch reads TSKETVKEPAKKPSAKVEKPAEAKAPKQETST. Over residues 158 to 185 the composition is skewed to low complexity; sequence KKPTTTTESKPKTSKAPAQKQAAKVAKP.

This sequence belongs to the universal ribosomal protein uL22 family. Part of the 50S ribosomal subunit.

In terms of biological role, this protein binds specifically to 23S rRNA; its binding is stimulated by other ribosomal proteins, e.g. L4, L17, and L20. It is important during the early stages of 50S assembly. It makes multiple contacts with different domains of the 23S rRNA in the assembled 50S subunit and ribosome. The globular domain of the protein is located near the polypeptide exit tunnel on the outside of the subunit, while an extended beta-hairpin is found that lines the wall of the exit tunnel in the center of the 70S ribosome. In Metamycoplasma arthritidis (strain 158L3-1) (Mycoplasma arthritidis), this protein is Large ribosomal subunit protein uL22.